A 514-amino-acid polypeptide reads, in one-letter code: Folylpolyglutamate synthase (514 aa).

82–85 (GKGS) provides a ligand contact to ATP. The Mg(2+) site is built by S107, E186, and H214. Positions 339 and 355 each coordinate ATP.

The protein belongs to the folylpolyglutamate synthase family. A monovalent cation serves as cofactor.

The protein resides in the mitochondrion inner membrane. The protein localises to the mitochondrion matrix. It is found in the cytoplasm. The catalysed reaction is (6S)-5,6,7,8-tetrahydrofolyl-(gamma-L-Glu)(n) + L-glutamate + ATP = (6S)-5,6,7,8-tetrahydrofolyl-(gamma-L-Glu)(n+1) + ADP + phosphate + H(+). Its pathway is cofactor biosynthesis; tetrahydrofolylpolyglutamate biosynthesis. Its function is as follows. Catalyzes conversion of folates to polyglutamate derivatives allowing concentration of folate compounds in the cell and the intracellular retention of these cofactors, which are important substrates for most of the folate-dependent enzymes that are involved in one-carbon transfer reactions involved in purine, pyrimidine and amino acid synthesis. This Candida albicans (Yeast) protein is Folylpolyglutamate synthase (MET7).